The primary structure comprises 657 residues: MGVEVPPEESNRCVRGCCRSAAIPLHLPPSSFSLLSPIAKGSESTVYEARLGGERVAAKKPVLSTSDDLDKFHYQLQLLWWVLPIELDHPGLARLVAAHARPPNYLMFFDFFEPPNLADKIHVEEWNPSVQQVVTIATDLAKALQYLNILGIVHRDIKPANILIDKDFHPHLADFGLAMYQKDIKHVSVENWRSSGKPTGGFHKKNMVGTLIYMAPEILRKDIHTEKSDVYSFAISINELLTGVVPYTDLRAEAQAHTVLEMTYTEQQLTAAIVSQGLRPALALPESGAPPSLLSLIQRCWDSDPQQRPSFKDITEELKIIEKHIAVNSCSLASPANKSQNGNTEVHHYQEALSWLNQGELFAKGNKLDSTVDHWSDIFDQSSKYCPTLSWGSFATCGRRETMEDTHFMLPHMSEEKDLHAFGIFDGHRGSAAAEFSVRAVPGFLKQFNSNTSPTDALTEAFVRTDIAFREELILHQKSKRITQKNWHPGCTAVTALIVRNKLFVANAGDCRAILNRAGEPFPMTRDHVASCPKERERIVKEGTEVKWQIDTWRVGAAALQVTRSIGDDDLKPAVTAQPEVIETILSPDDEFLVMASDGLWDVMSNEDVLSIIKDTVKEPGMCSKRLATEAAARGSKDNITVIVVFLRPVSTAERIY.

The 296-residue stretch at 32–327 folds into the Protein kinase domain; the sequence is FSLLSPIAKG…LKIIEKHIAV (296 aa). ATP contacts are provided by residues 38–46 and lysine 59; that span reads IAKGSESTV. Aspartate 156 serves as the catalytic Proton acceptor; for kinase activity. Residues 390-647 form the PPM-type phosphatase domain; the sequence is SWGSFATCGR…DNITVIVVFL (258 aa). Mn(2+) is bound by residues aspartate 426, glycine 427, aspartate 598, and aspartate 638.

This sequence in the N-terminal section; belongs to the protein kinase superfamily. Ser/Thr protein kinase family. In the C-terminal section; belongs to the PP2C family. Requires Mg(2+) as cofactor. Mn(2+) is required as a cofactor.

The enzyme catalyses L-seryl-[protein] + ATP = O-phospho-L-seryl-[protein] + ADP + H(+). It carries out the reaction L-threonyl-[protein] + ATP = O-phospho-L-threonyl-[protein] + ADP + H(+). The catalysed reaction is O-phospho-L-seryl-[protein] + H2O = L-seryl-[protein] + phosphate. It catalyses the reaction O-phospho-L-threonyl-[protein] + H2O = L-threonyl-[protein] + phosphate. The polypeptide is Protein kinase and PP2C-like domain-containing protein (Oryza sativa subsp. japonica (Rice)).